A 163-amino-acid polypeptide reads, in one-letter code: Biotin carboxyl carrier protein of acetyl-CoA carboxylase (163 aa).

Residues 85–161 enclose the Biotinyl-binding domain; sequence GDFIVSPLVG…QFGSKLFRIV (77 aa). N6-biotinyllysine is present on Lys-127.

Homodimer.

It participates in lipid metabolism; fatty acid biosynthesis. In terms of biological role, this protein is a component of the acetyl coenzyme A carboxylase complex; first, biotin carboxylase catalyzes the carboxylation of the carrier protein and then the transcarboxylase transfers the carboxyl group to form malonyl-CoA. This Chlamydia muridarum (strain MoPn / Nigg) protein is Biotin carboxyl carrier protein of acetyl-CoA carboxylase (accB).